The following is a 245-amino-acid chain: Ribonuclease PH (245 aa).

Phosphate-binding positions include R86 and 124–126; that span reads GTR.

This sequence belongs to the RNase PH family. In terms of assembly, homohexameric ring arranged as a trimer of dimers. It has been suggested that the active form is the dimer which binds tRNA and that the hexameric form protects the substrate recognition loop (approximately residues 65-82) from proteolysis.

The enzyme catalyses tRNA(n+1) + phosphate = tRNA(n) + a ribonucleoside 5'-diphosphate. Phosphorolytic 3'-5' exoribonuclease that plays an important role in tRNA 3'-end maturation. Removes nucleotide residues following the 3'-CCA terminus of tRNAs; can also add nucleotides to the ends of RNA molecules by using nucleoside diphosphates as substrates, but this may not be physiologically important. Probably plays a role in initiation of 16S rRNA degradation (leading to ribosome degradation) during starvation. Plays a role in the secondary pathway of 23S rRNA 3' end maturation. The polypeptide is Ribonuclease PH (Bacillus subtilis (strain 168)).